The following is a 544-amino-acid chain: Thermosome subunit (544 aa).

The protein belongs to the TCP-1 chaperonin family. Forms an oligomeric complex of eight-membered rings.

Its function is as follows. Molecular chaperone; binds unfolded polypeptides in vitro, and has a weak ATPase activity. The chain is Thermosome subunit (ths) from Methanothermococcus thermolithotrophicus (Methanococcus thermolithotrophicus).